The primary structure comprises 239 residues: Phosphoribosylaminoimidazole-succinocarboxamide synthase (239 aa).

Belongs to the SAICAR synthetase family.

The enzyme catalyses 5-amino-1-(5-phospho-D-ribosyl)imidazole-4-carboxylate + L-aspartate + ATP = (2S)-2-[5-amino-1-(5-phospho-beta-D-ribosyl)imidazole-4-carboxamido]succinate + ADP + phosphate + 2 H(+). Its pathway is purine metabolism; IMP biosynthesis via de novo pathway; 5-amino-1-(5-phospho-D-ribosyl)imidazole-4-carboxamide from 5-amino-1-(5-phospho-D-ribosyl)imidazole-4-carboxylate: step 1/2. This Bacillus cytotoxicus (strain DSM 22905 / CIP 110041 / 391-98 / NVH 391-98) protein is Phosphoribosylaminoimidazole-succinocarboxamide synthase.